A 188-amino-acid chain; its full sequence is Probable manganese efflux pump MntP (188 aa).

5 consecutive transmembrane segments (helical) span residues 3–23, 66–86, 106–128, 143–163, and 168–188; these read ITAT…ASIG, LEWN…RMII, WLLV…GLAF, ATLI…PILG, and ILGG…HFHG.

Belongs to the MntP (TC 9.B.29) family.

Its subcellular location is the cell inner membrane. In terms of biological role, probably functions as a manganese efflux pump. The sequence is that of Probable manganese efflux pump MntP from Escherichia fergusonii (strain ATCC 35469 / DSM 13698 / CCUG 18766 / IAM 14443 / JCM 21226 / LMG 7866 / NBRC 102419 / NCTC 12128 / CDC 0568-73).